Consider the following 101-residue polypeptide: Large ribosomal subunit protein uL23 (101 aa).

The protein belongs to the universal ribosomal protein uL23 family. In terms of assembly, part of the 50S ribosomal subunit. Contacts protein L29, and trigger factor when it is bound to the ribosome.

In terms of biological role, one of the early assembly proteins it binds 23S rRNA. One of the proteins that surrounds the polypeptide exit tunnel on the outside of the ribosome. Forms the main docking site for trigger factor binding to the ribosome. This is Large ribosomal subunit protein uL23 from Rhodococcus jostii (strain RHA1).